The primary structure comprises 327 residues: Interleukin-12 subunit beta (327 aa).

A signal peptide spans 1 to 22 (MHPQQLVVSWFSLVLLASPIVA). One can recognise an Ig-like C2-type domain in the interval 23–106 (MWELEKNVYV…LSRSLLLLHK (84 aa)). A disulfide bridge connects residues cysteine 50 and cysteine 90. N-linked (GlcNAc...) asparagine glycosylation occurs at asparagine 223. Residues 238 to 327 (PPKNLQLRPL…WSEWASVSCS (90 aa)) form the Fibronectin type-III domain.

Belongs to the IL-12B family. Heterodimer with IL12A; disulfide-linked. The heterodimer is known as interleukin IL-12. Heterodimer with IL23A; disulfide-linked. The heterodimer is known as interleukin IL-23. Also secreted as a monomer. Interacts with NBR1; this interaction promotes IL-12 secretion.

It is found in the secreted. Functionally, cytokine that can act as a growth factor for activated T and NK cells, enhance the lytic activity of NK/lymphokine-activated killer cells, and stimulate the production of IFN-gamma by resting PBMC. In terms of biological role, associates with IL23A to form the IL-23 interleukin, a heterodimeric cytokine which functions in innate and adaptive immunity. IL-23 may constitute with IL-17 an acute response to infection in peripheral tissues. IL-23 binds to a heterodimeric receptor complex composed of IL12RB1 and IL23R, activates the Jak-Stat signaling cascade, stimulates memory rather than naive T-cells and promotes production of pro-inflammatory cytokines. IL-23 induces autoimmune inflammation and thus may be responsible for autoimmune inflammatory diseases and may be important for tumorigenesis. This Bos taurus (Bovine) protein is Interleukin-12 subunit beta (IL12B).